The primary structure comprises 342 residues: Vancomycin B-type resistance protein VanB (342 aa).

ATP is bound by residues K132, 168–170 (FVK), 176–177 (SS), 206–213 (EQAISGCE), and F240. Positions 136-337 (YILTKNAGIA…LPALIDSLIT (202 aa)) constitute an ATP-grasp domain. H243 contributes to the substrate binding site. An ATP-binding site is contributed by 303 to 304 (NE). Residues E304 and N306 each coordinate Mg(2+).

It belongs to the D-alanine--D-alanine ligase family. The cofactor is Mg(2+). Mn(2+) serves as cofactor.

It is found in the cell membrane. It carries out the reaction (R)-lactate + D-alanine + ATP = D-alanyl-(R)-lactate + ADP + phosphate. Required for high-level resistance to glycopeptides antibiotics. D-Ala--D-Ala ligase of altered specificity which catalyzes ester bond formation between D-Ala and various D-hydroxy acids; producing a peptidoglycan which does not terminate in D-alanine but in D-lactate, thus preventing vancomycin binding. The protein is Vancomycin B-type resistance protein VanB (vanB) of Enterococcus faecalis (strain ATCC 700802 / V583).